Here is a 454-residue protein sequence, read N- to C-terminus: Probable spastin homolog Bm1_53365 (454 aa).

218-225 (GPPGNGKT) serves as a coordination point for ATP.

It belongs to the AAA ATPase family. Spastin subfamily. In terms of assembly, homohexamer. The homohexamer is stabilized by ATP-binding. The homohexamer may adopt a ring conformation through which microtubules pass prior to being severed. Interacts with microtubules.

The protein localises to the cytoplasm. The protein resides in the cytoskeleton. It localises to the perinuclear region. It catalyses the reaction n ATP + n H2O + a microtubule = n ADP + n phosphate + (n+1) alpha/beta tubulin heterodimers.. Severs microtubules, probably in an ATP-dependent fashion. In Brugia malayi (Filarial nematode worm), this protein is Probable spastin homolog Bm1_53365.